Reading from the N-terminus, the 138-residue chain is Ribosome-binding factor A (138 aa).

The interval 119-138 is disordered; sequence DMDEKKNSDEKRDSDEKLED.

The protein belongs to the RbfA family. In terms of assembly, monomer. Binds 30S ribosomal subunits, but not 50S ribosomal subunits or 70S ribosomes.

The protein localises to the cytoplasm. In terms of biological role, one of several proteins that assist in the late maturation steps of the functional core of the 30S ribosomal subunit. Associates with free 30S ribosomal subunits (but not with 30S subunits that are part of 70S ribosomes or polysomes). Required for efficient processing of 16S rRNA. May interact with the 5'-terminal helix region of 16S rRNA. This Alkaliphilus metalliredigens (strain QYMF) protein is Ribosome-binding factor A.